The chain runs to 310 residues: Ribosomal RNA small subunit methyltransferase H (310 aa).

S-adenosyl-L-methionine is bound by residues 32 to 34 (AGH), aspartate 51, phenylalanine 78, aspartate 99, and glutamine 106. Positions 290–310 (GELEDNRRSRSAKLRVAEKQK) are disordered.

The protein belongs to the methyltransferase superfamily. RsmH family.

It localises to the cytoplasm. It carries out the reaction cytidine(1402) in 16S rRNA + S-adenosyl-L-methionine = N(4)-methylcytidine(1402) in 16S rRNA + S-adenosyl-L-homocysteine + H(+). Specifically methylates the N4 position of cytidine in position 1402 (C1402) of 16S rRNA. The sequence is that of Ribosomal RNA small subunit methyltransferase H from Exiguobacterium sp. (strain ATCC BAA-1283 / AT1b).